Reading from the N-terminus, the 440-residue chain is Diels-Alderase mycB (440 aa).

Positions 1–18 (MGYLVKLACGLLLPLATA) are cleaved as a signal peptide. 3 N-linked (GlcNAc...) asparagine glycosylation sites follow: N80, N155, and N332.

It belongs to the Diels-Alderase family.

The catalysed reaction is (5S)-5-(2-methylpropyl)-3-[(2E,6R,8E,10E,12E)-6,8,10,12-tetramethyltetradeca-2,8,10,12-tetraenoyl]-2,5-dihydro-1H-pyrrol-2-one = (5S)-3-[(1S,2R,4aR,6R,8aS)-2-(but-2-en-2-yl)-3,4a,6-trimethyl-1,2,4a,5,6,7,8,8a-octahydronaphthalene-1-carbonyl]-5-(2-methylpropyl)-2,5-dihydro-1H-pyrrol-2-one. The enzyme catalyses (5Z)-5-(2-methylpropylidene)-3-[(2E,6R,8E,10E,12E)-6,8,10,12-tetramethyltetradeca-2,8,10,12-tetraenoyl]-2,5-dihydro-1H-pyrrol-2-one = myceliothermophin E. The protein operates within mycotoxin biosynthesis. Functionally, diels-Alderase; part of the gene cluster that mediates the biosynthesis of myceliothermophins, mycotoxins that contain a trans-fused decalin ring system connected to a conjugated 3-pyrrolin-2-one moiety and that have potential anti-tumor properties. The polyketide synthase module (PKS) of the PKS-NRPS mycA is responsible for the synthesis of the octaketide backbone. The downstream nonribosomal peptide synthetase (NRPS) module then amidates the carboxyl end of the octaketide with a leucine. A reductase-like domain (R) at the C-terminus catalyzes the reductive release of the polyketide-amino acid intermediate. Because mycA lacks a designated enoylreductase (ER) domain, the required activity is provided the enoyl reductase mycC. Following mycA-catalyzed construction and release of aminoacyl polyketide aldehyde, Knoevenagel condensation yields the expected ketone. This C18 keto acyclic precursor is the substrate of the Diels-Alderase mycB, that catalyzes the Diels-Alder cycloaddition to produce myceliothermophin E. A yet unknown oxygenase involved in the production of myceliothermophin A, via substitution with a hydroxyl group at the C21, has still to be identified. This Thermothelomyces thermophilus (strain ATCC 42464 / BCRC 31852 / DSM 1799) (Sporotrichum thermophile) protein is Diels-Alderase mycB.